A 209-amino-acid polypeptide reads, in one-letter code: Urease accessory protein UreG (209 aa).

GTP is bound at residue 18–25 (GPVGSGKT).

The protein belongs to the SIMIBI class G3E GTPase family. UreG subfamily. Homodimer. UreD, UreF and UreG form a complex that acts as a GTP-hydrolysis-dependent molecular chaperone, activating the urease apoprotein by helping to assemble the nickel containing metallocenter of UreC. The UreE protein probably delivers the nickel.

It is found in the cytoplasm. In terms of biological role, facilitates the functional incorporation of the urease nickel metallocenter. This process requires GTP hydrolysis, probably effectuated by UreG. The polypeptide is Urease accessory protein UreG (Cupriavidus pinatubonensis (strain JMP 134 / LMG 1197) (Cupriavidus necator (strain JMP 134))).